The chain runs to 340 residues: HTH-type transcriptional repressor PurR (340 aa).

One can recognise an HTH lacI-type domain in the interval 2–56 (ATIKDVAKLVGVSTTTVSHVINKTRFVAEDTTKAVWEAIASLNYSPSAVARSLKV). Positions 4–23 (IKDVAKLVGVSTTTVSHVIN) form a DNA-binding region, H-T-H motif. Residues 48–56 (SAVARSLKV) mediate DNA binding. The hypoxanthine site is built by tyrosine 73, lysine 188, threonine 190, phenylalanine 219, and aspartate 273.

Homodimer.

It participates in purine metabolism; purine nucleotide biosynthesis [regulation]. Is the main repressor of the genes involved in the de novo synthesis of purine nucleotides, regulating purB, purC, purEK, purF, purHD, purL, purMN and guaBA expression. PurR is allosterically activated to bind its cognate DNA by binding the purine corepressors, hypoxanthine or guanine, thereby effecting transcription repression. The sequence is that of HTH-type transcriptional repressor PurR from Glaesserella parasuis serovar 5 (strain SH0165) (Haemophilus parasuis).